We begin with the raw amino-acid sequence, 101 residues long: Small ribosomal subunit protein uS14 (101 aa).

Belongs to the universal ribosomal protein uS14 family. Part of the 30S ribosomal subunit. Contacts proteins S3 and S10.

In terms of biological role, binds 16S rRNA, required for the assembly of 30S particles and may also be responsible for determining the conformation of the 16S rRNA at the A site. This chain is Small ribosomal subunit protein uS14, found in Escherichia coli O8 (strain IAI1).